A 359-amino-acid polypeptide reads, in one-letter code: Molybdenum import ATP-binding protein ModC (359 aa).

Residues 1–233 (MSGLTVSIRG…IDAESEGGGV (233 aa)) enclose the ABC transporter domain. 32-39 (GHSGAGKT) contacts ATP. The 67-residue stretch at 289–355 (AISIRNLLPV…VKAVSVDRAA (67 aa)) folds into the Mop domain.

The protein belongs to the ABC transporter superfamily. Molybdate importer (TC 3.A.1.8) family. As to quaternary structure, the complex is composed of two ATP-binding proteins (ModC), two transmembrane proteins (ModB) and a solute-binding protein (ModA).

Its subcellular location is the cell inner membrane. It carries out the reaction molybdate(out) + ATP + H2O = molybdate(in) + ADP + phosphate + H(+). Its function is as follows. Part of the ABC transporter complex ModABC involved in molybdenum import. Responsible for energy coupling to the transport system. The protein is Molybdenum import ATP-binding protein ModC of Brucella melitensis biotype 1 (strain ATCC 23456 / CCUG 17765 / NCTC 10094 / 16M).